The primary structure comprises 262 residues: 3-deoxy-manno-octulosonate cytidylyltransferase (262 aa).

It belongs to the KdsB family.

It localises to the cytoplasm. The catalysed reaction is 3-deoxy-alpha-D-manno-oct-2-ulosonate + CTP = CMP-3-deoxy-beta-D-manno-octulosonate + diphosphate. Its pathway is nucleotide-sugar biosynthesis; CMP-3-deoxy-D-manno-octulosonate biosynthesis; CMP-3-deoxy-D-manno-octulosonate from 3-deoxy-D-manno-octulosonate and CTP: step 1/1. It functions in the pathway bacterial outer membrane biogenesis; lipopolysaccharide biosynthesis. Activates KDO (a required 8-carbon sugar) for incorporation into bacterial lipopolysaccharide in Gram-negative bacteria. The polypeptide is 3-deoxy-manno-octulosonate cytidylyltransferase (Acidovorax sp. (strain JS42)).